A 1849-amino-acid polypeptide reads, in one-letter code: Protein virilizer (1849 aa).

Basic and acidic residues-rich tracts occupy residues 206–219 (QHYH…QREM), 242–265 (THSE…DWSR), 281–291 (RSRSDADEHKW), 332–347 (HSSE…EERS), and 785–818 (VEAK…AAEE). Disordered stretches follow at residues 206–364 (QHYH…DEII), 783–818 (RVVE…AAEE), 1557–1584 (SASM…SSSG), 1666–1686 (GESK…EMTP), 1715–1782 (RGRG…NRGS), and 1798–1849 (IGSP…PYLR). Positions 1671–1684 (TLNLSGSPQSNREM) are enriched in polar residues. A compositionally biased stretch (low complexity) spans 1732 to 1742 (SRPPNTSRPPS). The segment covering 1800 to 1818 (SPSSWTESGGGSYRSTSES) has biased composition (polar residues).

The protein belongs to the vir family. In terms of assembly, component of the WMM complex, a N6-methyltransferase complex composed of a catalytic subcomplex, named MAC, and of an associated subcomplex, named MACOM. The MAC subcomplex is composed of Ime4/Mettl3 and Mettl14. The MACOM subcomplex is composed of fl(2)d, Flacc/Xio, Hakai, vir, and, in some cases of nito. Part of a complex containing fl(2)d, Sxl and vir.

Its subcellular location is the nucleus. In terms of biological role, associated component of the WMM complex, a complex that mediates N6-methyladenosine (m6A) methylation of mRNAs, a modification that plays a role in the efficiency of mRNA splicing and is required for sex determination. Required for sex determination and dosage compensation via Sxl alternative splicing: m6A methylation acts as a key regulator of Sxl pre-mRNA and promotes female-specific alternative splicing of Sxl, which determines female physiognomy. M6A methylation is also required for neuronal functions. Required for proper inclusion of regulated exons in Ubx transcripts, leading to isoforms Ia/b and IIa/b. The polypeptide is Protein virilizer (vir) (Drosophila pseudoobscura pseudoobscura (Fruit fly)).